The sequence spans 307 residues: tRNA dimethylallyltransferase (307 aa).

Position 9–16 (9–16 (GPTAVGKT)) interacts with ATP. A substrate-binding site is contributed by 11–16 (TAVGKT). The interaction with substrate tRNA stretch occupies residues 34 to 37 (DSMQ).

This sequence belongs to the IPP transferase family. As to quaternary structure, monomer. Requires Mg(2+) as cofactor.

The catalysed reaction is adenosine(37) in tRNA + dimethylallyl diphosphate = N(6)-dimethylallyladenosine(37) in tRNA + diphosphate. Catalyzes the transfer of a dimethylallyl group onto the adenine at position 37 in tRNAs that read codons beginning with uridine, leading to the formation of N6-(dimethylallyl)adenosine (i(6)A). In Limosilactobacillus fermentum (strain NBRC 3956 / LMG 18251) (Lactobacillus fermentum), this protein is tRNA dimethylallyltransferase.